The primary structure comprises 424 residues: Histidine--tRNA ligase (424 aa).

This sequence belongs to the class-II aminoacyl-tRNA synthetase family. Homodimer.

The protein localises to the cytoplasm. The enzyme catalyses tRNA(His) + L-histidine + ATP = L-histidyl-tRNA(His) + AMP + diphosphate + H(+). This is Histidine--tRNA ligase from Sodalis glossinidius (strain morsitans).